Here is a 946-residue protein sequence, read N- to C-terminus: Bifunctional glutamine synthetase adenylyltransferase/adenylyl-removing enzyme (946 aa).

Positions 1 to 440 (MKPLSSPLQQ…VFNELIGDDE (440 aa)) are adenylyl removase. The tract at residues 449–946 (SEQWRELWQD…ASWQKWLVEE (498 aa)) is adenylyl transferase.

The protein belongs to the GlnE family. Requires Mg(2+) as cofactor.

It carries out the reaction [glutamine synthetase]-O(4)-(5'-adenylyl)-L-tyrosine + phosphate = [glutamine synthetase]-L-tyrosine + ADP. It catalyses the reaction [glutamine synthetase]-L-tyrosine + ATP = [glutamine synthetase]-O(4)-(5'-adenylyl)-L-tyrosine + diphosphate. Functionally, involved in the regulation of glutamine synthetase GlnA, a key enzyme in the process to assimilate ammonia. When cellular nitrogen levels are high, the C-terminal adenylyl transferase (AT) inactivates GlnA by covalent transfer of an adenylyl group from ATP to specific tyrosine residue of GlnA, thus reducing its activity. Conversely, when nitrogen levels are low, the N-terminal adenylyl removase (AR) activates GlnA by removing the adenylyl group by phosphorolysis, increasing its activity. The regulatory region of GlnE binds the signal transduction protein PII (GlnB) which indicates the nitrogen status of the cell. The polypeptide is Bifunctional glutamine synthetase adenylyltransferase/adenylyl-removing enzyme (Escherichia coli O7:K1 (strain IAI39 / ExPEC)).